We begin with the raw amino-acid sequence, 218 residues long: Lactosylceramide 4-alpha-galactosyltransferase (218 aa).

The DXD motif signature appears at 57–59; sequence DTD.

Belongs to the glycosyltransferase 32 family.

Its subcellular location is the golgi apparatus membrane. The catalysed reaction is a beta-D-Gal-(1-&gt;4)-beta-D-Glc-(1&lt;-&gt;1)-Cer(d18:1(4E)) + UDP-alpha-D-galactose = a globoside Gb3Cer (d18:1(4E)) + UDP + H(+). It catalyses the reaction a beta-D-Gal-(1&lt;-&gt;1')-ceramide + UDP-alpha-D-galactose = alpha-D-Gal-(1-&gt;4)-beta-D-Gal-(1&lt;-&gt;1')-Cer + UDP + H(+). It functions in the pathway glycolipid biosynthesis. Functionally, catalyzes the transfer of galactose from UDP-alpha-D-galactose to lactosylceramide/beta-D-galactosyl-(1-&gt;4)-beta-D-glucosyl-(1&lt;-&gt;1)-ceramide(d18:1(4E)) to produce globotriaosylceramide/globoside Gb3Cer (d18:1(4E)). Also able to transfer galactose to galactosylceramide/beta-D-Gal-(1&lt;-&gt;1')-Cer. Globoside Gb3Cer is a glycosphingolipid of the globo serie, one of the major types of neutral root structures of glycosphingolipids, that constitute a significant portion of mammalian cell membranes. This chain is Lactosylceramide 4-alpha-galactosyltransferase (A4GALT), found in Pongo pygmaeus (Bornean orangutan).